The chain runs to 139 residues: D-ribose pyranase (139 aa).

H20 serves as the catalytic Proton donor. Substrate-binding positions include D28, H106, and 128–130; that span reads YAN.

The protein belongs to the RbsD / FucU family. RbsD subfamily. In terms of assembly, homodecamer.

It localises to the cytoplasm. It catalyses the reaction beta-D-ribopyranose = beta-D-ribofuranose. It participates in carbohydrate metabolism; D-ribose degradation; D-ribose 5-phosphate from beta-D-ribopyranose: step 1/2. Its function is as follows. Catalyzes the interconversion of beta-pyran and beta-furan forms of D-ribose. The polypeptide is D-ribose pyranase (Haemophilus influenzae (strain PittGG)).